The chain runs to 377 residues: 5-hydroxytryptamine receptor 1D (377 aa).

The disordered stretch occupies residues 1-23 (MSPLNQSAEGLPQEASNRSLNAT). The Extracellular portion of the chain corresponds to 1–38 (MSPLNQSAEGLPQEASNRSLNATETSEAWDPRTLQALK). N5, N17, and N21 each carry an N-linked (GlcNAc...) asparagine glycan. Residues 39 to 64 (ISLAVVLSVITLATVLSNAFVLTTIL) form a helical membrane-spanning segment. Over 65-75 (LTRKLHTPANY) the chain is Cytoplasmic. Residues 76-97 (LIGSLATTDLLVSILVMPISIA) traverse the membrane as a helical segment. Over 98 to 109 (YTITHTWNFGQI) the chain is Extracellular. The helical transmembrane segment at 110 to 134 (LCDIWLSSDITCCTASILHLCVIAL) threads the bilayer. A disulfide bond links C111 and C188. The serotonin site is built by D118 and C122. The DRY motif; important for ligand-induced conformation changes signature appears at 135–137 (DRY). Over 135 to 154 (DRYWAITDALEYSKRRTAGH) the chain is Cytoplasmic. A helical membrane pass occupies residues 155–176 (AATMIAIVWAISICISIPPLFW). The Extracellular portion of the chain corresponds to 177 to 194 (RQAKAQEEMSDCLVNTSQ). Residues 195–218 (ISYTIYSTCGAFYIPSVLLIILYG) form a helical membrane-spanning segment. Over 219–300 (RIYRAARNRI…ISAARERKAT (82 aa)) the chain is Cytoplasmic. The helical transmembrane segment at 301–326 (KILGIILGAFIICWLPFFVVSLVLPI) threads the bilayer. S321 is a serotonin binding site. Residues 327–335 (CRDSCWIHP) lie on the Extracellular side of the membrane. A helical transmembrane segment spans residues 336–359 (ALFDFFTWLGYLNSLINPIIYTVF). The short motif at 352–356 (NPIIY) is the NPxxY motif; important for ligand-induced conformation changes and signaling element. At 360 to 377 (NEEFRQAFQKIVPFRKAS) the chain is on the cytoplasmic side.

It belongs to the G-protein coupled receptor 1 family. As to quaternary structure, homodimer. Heterodimer with HTR1B. As to expression, detected in brain neocortex and caudate nucleus (at protein level).

It is found in the cell membrane. Functionally, G-protein coupled receptor for 5-hydroxytryptamine (serotonin). Also functions as a receptor for ergot alkaloid derivatives, various anxiolytic and antidepressant drugs and other psychoactive substances. Ligand binding causes a conformation change that triggers signaling via guanine nucleotide-binding proteins (G proteins) and modulates the activity of downstream effectors, such as adenylate cyclase. HTR1D is coupled to G(i)/G(o) G alpha proteins and mediates inhibitory neurotransmission by inhibiting adenylate cyclase activity. Regulates the release of 5-hydroxytryptamine in the brain, and thereby affects neural activity. May also play a role in regulating the release of other neurotransmitters. May play a role in vasoconstriction. This Homo sapiens (Human) protein is 5-hydroxytryptamine receptor 1D.